The primary structure comprises 251 residues: uncharacterized protein (251 aa).

4 helical membrane passes run 56-76 (LAVV…TLVA), 104-124 (IITV…FLLT), 184-204 (HGFV…LIIV), and 208-228 (YLIA…ANIS).

The protein resides in the membrane. This is an uncharacterized protein from Caenorhabditis elegans.